Consider the following 308-residue polypeptide: ATP synthase gamma chain (308 aa).

The protein belongs to the ATPase gamma chain family. As to quaternary structure, F-type ATPases have 2 components, CF(1) - the catalytic core - and CF(0) - the membrane proton channel. CF(1) has five subunits: alpha(3), beta(3), gamma(1), delta(1), epsilon(1). CF(0) has three main subunits: a, b and c.

Its subcellular location is the cell inner membrane. In terms of biological role, produces ATP from ADP in the presence of a proton gradient across the membrane. The gamma chain is believed to be important in regulating ATPase activity and the flow of protons through the CF(0) complex. This chain is ATP synthase gamma chain, found in Salinibacter ruber (strain DSM 13855 / M31).